Reading from the N-terminus, the 648-residue chain is FAD-binding monooxygenase trt3 (648 aa).

FAD contacts are provided by residues 118–121 (TWYW), 130–131 (DI), and tyrosine 136. 128 to 130 (MCD) provides a ligand contact to NADP(+). Residues 274–280 (TGSTAVQ) and 297–298 (RT) contribute to the NADP(+) site.

Belongs to the FAD-binding monooxygenase family. Requires FAD as cofactor.

Its pathway is secondary metabolite biosynthesis; terpenoid biosynthesis. FAD-binding monooxygenase; part of the gene cluster that mediates the biosynthesis of terretonin, a fungal meroterpenoid that acts as a mycotoxin. The first step of the pathway is the synthesis of 3,5-dimethylorsellinic acid (DMOA) by the polyketide synthase trt4. DMOA is then prenylated into farnesyl-DMOA by the polyprenyl transferase trt2. Methylation by the methyltransferase trt5 then leads to farnesyl-DMOA methyl ester which is further subject to epoxidation by the FAD-dependent monooxygenase trt8 to yield epoxyfarnesyl-DMOA methyl ester. Cyclization of epoxyfarnesyl-DMOA methyl ester by the terpene cyclase trt1 leads to a tetracycle intermediate which is in turn converted to preterretonin. Dehydrogenase trt9 comes next to transform preterretonin to preterrenoid. The FAD-dependent monooxygenase trt3 is then required for the C-hydroxylation at C16 of preterrenoid to yield terrenoid. The cytochrome P450 trt6 catalyzes three successive oxidations to transform terrenoid into an unstable intermediate, which then undergoes the D-ring expansion and unusual rearrangement of the methoxy group to afford the core skeleton of terretonin. Trt14 catalyzes the D-ring expansion of terretonin involving intramolecular methoxy rearrangement as well as the hydrolysis of the expanded D-ring and the methyl ester moiety. Finally, the nonheme iron-dependent dioxygenase trt7 accomplishes the last two oxidation reactions steps to complete the biosynthesis of terretonin. Terretonin C is produced via spontaneous decarboxylation of the terretonin precursor. Another shunt product of the terretonin biosynthesis is dihydrofarnesyl-DMOA, derived from epoxyfarnesyl-DMOA through hydrolysis of the epoxide. The chain is FAD-binding monooxygenase trt3 from Aspergillus terreus (strain NIH 2624 / FGSC A1156).